We begin with the raw amino-acid sequence, 176 residues long: Inner membrane-spanning protein YciB (176 aa).

The next 6 membrane-spanning stretches (helical) occupy residues 3–23, 24–44, 49–69, 81–101, 121–141, and 149–169; these read FLFD…WGIF, TATA…AFRH, TMLW…LVLH, LYWL…NNLI, VAWA…VHNF, and FKLF…SLWL.

The protein belongs to the YciB family.

It is found in the cell inner membrane. In terms of biological role, plays a role in cell envelope biogenesis, maintenance of cell envelope integrity and membrane homeostasis. In Burkholderia vietnamiensis (strain G4 / LMG 22486) (Burkholderia cepacia (strain R1808)), this protein is Inner membrane-spanning protein YciB.